A 2381-amino-acid chain; its full sequence is Myb-like protein U (2381 aa).

4 disordered regions span residues 1-85 (MKTK…TSNN), 148-167 (SSSG…GGIS), 178-492 (PTIP…NNNN), and 641-696 (NINN…GDEM). Low complexity-rich tracts occupy residues 30–41 (SKSSSKVSQSSS) and 64–79 (TIPA…PTLT). 3 stretches are compositionally biased toward low complexity: residues 192–204 (NLSS…NILS), 225–261 (ENVN…SSSS), and 291–315 (SNKS…NNKK). Residues 331–343 (SEYDSSDSSDMDL) show a composition bias toward acidic residues. Residues 363-405 (TTKPNNSNSNNNNNNNSINSTIPASNNINSANNSKTTNKNITS) are compositionally biased toward low complexity. The segment covering 421–430 (SETPILTSVK) has biased composition (polar residues). 2 stretches are compositionally biased toward low complexity: residues 435 to 492 (QQIP…NNNN) and 641 to 692 (NINN…NNNN). The Myb-like domain maps to 856-899 (WHEEEKLLFRELFCAYGRDWQMVSTLMCGTKSPTQIKNFYYDVR). Disordered regions lie at residues 932-1024 (KPEQ…ETPP), 1068-1093 (INQS…NINP), 1145-1207 (TSST…SNQE), 1295-1339 (STTT…PPID), 1422-1474 (PYYP…LSTP), 1597-1647 (PPAT…TTIV), 1667-1849 (PIVK…PPPV), 1961-1985 (TTVP…NGLA), 2055-2106 (TSTV…NGLT), and 2122-2280 (LSGI…NKND). Residues 936–953 (NVNSNNNNNGGGNSLKDG) show a composition bias toward low complexity. The span at 982-995 (VKKKSRTASKRSFR) shows a compositional bias: basic residues. Residues 1000–1013 (ANETNRTPKNQPKP) are compositionally biased toward polar residues. Composition is skewed to low complexity over residues 1069-1092 (NQSS…NNIN), 1145-1186 (TSST…TGSA), 1195-1205 (VNNNNNNNLSN), and 1306-1325 (TTTP…QLQQ). Over residues 1326–1337 (LPPPPPPPPKPP) the composition is skewed to pro residues. Positions 1427–1474 (PSSTTTNSATSTPTSTPTSTPSTSASTLTPTSTPTSTPVPAPTSLSTP) are enriched in low complexity. Over residues 1597-1606 (PPATITPILP) the composition is skewed to pro residues. Residues 1618–1637 (SSSSSSSSSSSSSSSSSSSS) show a composition bias toward low complexity. Polar residues-rich tracts occupy residues 1638–1647 (TTKNNSTTIV) and 1671–1701 (QESN…KTLL). 2 stretches are compositionally biased toward low complexity: residues 1702–1735 (PSNS…NPSS) and 1743–1809 (TSNK…TLKP). The segment covering 1829 to 1844 (APTNSTNQNTIPNATT) has biased composition (polar residues). Low complexity-rich tracts occupy residues 1961-1970 (TTVPGTTTTT) and 2065-2097 (NNMT…QQST). A compositionally biased stretch (polar residues) spans 2129–2138 (NTLSGKSPTP). A compositionally biased stretch (low complexity) spans 2154 to 2209 (PSLSSSSANPISITNNTTSLSQQSNTTNTMPSTVSLSSGSTSINSNSSNSKSLRSP). The segment covering 2210–2278 (KSSDNDGKES…NNNDKFDSNK (69 aa)) has biased composition (basic and acidic residues).

The sequence is that of Myb-like protein U (mybU) from Dictyostelium discoideum (Social amoeba).